Reading from the N-terminus, the 130-residue chain is Small ribosomal subunit protein uS11 (130 aa).

It belongs to the universal ribosomal protein uS11 family. Part of the 30S ribosomal subunit. Interacts with proteins S7 and S18. Binds to IF-3.

Functionally, located on the platform of the 30S subunit, it bridges several disparate RNA helices of the 16S rRNA. Forms part of the Shine-Dalgarno cleft in the 70S ribosome. The chain is Small ribosomal subunit protein uS11 from Campylobacter lari (strain RM2100 / D67 / ATCC BAA-1060).